Here is a 484-residue protein sequence, read N- to C-terminus: Regulator of G-protein signaling 9 (484 aa).

The DEP domain maps to 30–105 (PDTGVKTQSQ…PDSSLYRFQT (76 aa)). A G protein gamma domain is found at 219-280 (ITAVKKEIMY…ITDDTQFWDL (62 aa)). The 116-residue stretch at 299–414 (NFSELIRDPK…LKSPIYKEML (116 aa)) folds into the RGS domain.

Heterodimer with Gbeta5. Interacts with RGS7BP, leading to regulate the subcellular location of the heterodimer formed with Gbeta5. Component of the RGS9-1-Gbeta5 complex composed of RGS9 (RGS9-1), Gbeta5 (GNB5) and RGS9BP. Post-translationally, phosphorylation is decreased by light exposition.

Its subcellular location is the membrane. Inhibits signal transduction by increasing the GTPase activity of G protein alpha subunits thereby driving them into their inactive GDP-bound form. Binds to G(t)-alpha. Involved in phototransduction; key element in the recovery phase of visual transduction. This is Regulator of G-protein signaling 9 from Tamias striatus (Eastern chipmunk).